We begin with the raw amino-acid sequence, 373 residues long: LIM domain-binding protein 1 (373 aa).

Disordered regions lie at residues 248-297 and 329-373; these read PPAE…LSSQ and DAAN…QASQ. Residues 266 to 282 show a composition bias toward low complexity; it reads SGGSTMSSGGGNTNNSN. A compositionally biased stretch (polar residues) spans 288–297; the sequence is PASTFALSSQ. Residues 298–337 form the LIM interaction domain (LID) domain; that stretch reads DVMVVGEPTLMGGEFGDEDERLITRLENTQFDAANGIDDE.

The protein belongs to the LDB family. Forms homodimers and heterodimers. Interacts with and activates lhx1/lim1. The stoichiometry of lhx1/lim1 and ldb1 is important for their function and an excess of ldb1 can inhibit lhx1/lim1 function. When bound to lhx1/lim1, escapes degradation by rnf12. Interacts with the N-terminal region of rnf12. Post-translationally, undergoes rnf12-mediated ubiquitin-proteasome-dependent degradation.

The protein localises to the nucleus. In terms of biological role, binds to the LIM domain of a wide variety of LIM domain-containing transcription factors. Acts as a coactivator together with otx2 to stimulate lhx1/lim1-mediated activation of the gsc promoter in the Spemann organizer. Acts synergistically with lhx1/lim1 and ssbp in axis formation. The sequence is that of LIM domain-binding protein 1 from Xenopus tropicalis (Western clawed frog).